Reading from the N-terminus, the 809-residue chain is Leucine--tRNA ligase (809 aa).

The 'HIGH' region motif lies at 40 to 50 (PYPSGRIHMGH). Residues 579 to 583 (KMSKS) carry the 'KMSKS' region motif. K582 is an ATP binding site.

This sequence belongs to the class-I aminoacyl-tRNA synthetase family.

It is found in the cytoplasm. The catalysed reaction is tRNA(Leu) + L-leucine + ATP = L-leucyl-tRNA(Leu) + AMP + diphosphate. The sequence is that of Leucine--tRNA ligase from Campylobacter jejuni (strain RM1221).